The sequence spans 155 residues: Small ribosomal subunit protein uS7c (155 aa).

It belongs to the universal ribosomal protein uS7 family. As to quaternary structure, part of the 30S ribosomal subunit.

Its subcellular location is the plastid. It localises to the chloroplast. In terms of biological role, one of the primary rRNA binding proteins, it binds directly to 16S rRNA where it nucleates assembly of the head domain of the 30S subunit. In Ananas comosus (Pineapple), this protein is Small ribosomal subunit protein uS7c (rps7).